Here is a 104-residue protein sequence, read N- to C-terminus: Protein METHYLENE BLUE SENSITIVITY 2 (104 aa).

The span at 1–11 (MTGKAKPKKHT) shows a compositional bias: basic residues. Disordered stretches follow at residues 1–46 (MTGK…GHAK) and 64–104 (IHHE…SLKK). Composition is skewed to basic and acidic residues over residues 36–46 (RTGKEKGGHAK) and 73–82 (LTYEEPRNLH).

It localises to the nucleus. It is found in the cytoplasm. The protein localises to the stress granule. Its function is as follows. Required for acclimation to reactive oxygen species (ROS) responses downstream of beta-cyclocitral, including singlet oxygen 1O(2) detoxification reactions, especially upon light-mediated photooxidative stress, and leading to programmed cell death. Prevents leaf senescence. In Arabidopsis thaliana (Mouse-ear cress), this protein is Protein METHYLENE BLUE SENSITIVITY 2.